Reading from the N-terminus, the 296-residue chain is Small ribosomal subunit protein uS2 (296 aa).

Residues 245–296 (WEAPAAGFAGATGTGWDGAAGDEWGAAPATTEWAASAAPAAASGEAAKETTW) form a disordered region. The segment covering 263 to 289 (AAGDEWGAAPATTEWAASAAPAAASGE) has biased composition (low complexity).

It belongs to the universal ribosomal protein uS2 family. As to quaternary structure, component of the small ribosomal subunit. Mature ribosomes consist of a small (40S) and a large (60S) subunit. The 40S subunit contains about 33 different proteins and 1 molecule of RNA (18S). The 60S subunit contains about 49 different proteins and 3 molecules of RNA (25S, 5.8S and 5S). Interacts with RPS21.

The protein localises to the cytoplasm. Its function is as follows. Required for the assembly and/or stability of the 40S ribosomal subunit. Required for the processing of the 20S rRNA-precursor to mature 18S rRNA in a late step of the maturation of 40S ribosomal subunits. The polypeptide is Small ribosomal subunit protein uS2 (Fusarium vanettenii (strain ATCC MYA-4622 / CBS 123669 / FGSC 9596 / NRRL 45880 / 77-13-4) (Fusarium solani subsp. pisi)).